A 187-amino-acid polypeptide reads, in one-letter code: MTGPPGRSDDLNALLRQIARGERDAFAMFYDHTCTRVYGLVARVLRDAGYSEETTQEIYLEVWRTASDYDATKGSPLAWLLTMAHRRAVDRVRAEQAGSQRESRYGAANVDLASDVVADSAIAGDERRRVVECLDGLTDTQRQCIELAYYGGLTYAEVSQRLATNLSTIKSRMRDALRGLRNCLDAS.

Residues Tyr-30–Gln-96 are sigma-70 factor domain-2. Residues Glu-53 to Gln-56 carry the Interaction with polymerase core subunit RpoC motif. The tract at residues Cys-133–Asn-182 is sigma-70 factor domain-4. The H-T-H motif DNA-binding region spans Tyr-155 to Arg-174.

Belongs to the sigma-70 factor family. ECF subfamily. In terms of assembly, interacts transiently with the RNA polymerase catalytic core formed by RpoA, RpoB, RpoC and RpoZ (2 alpha, 1 beta, 1 beta' and 1 omega subunit) to form the RNA polymerase holoenzyme that can initiate transcription. Interacts (via sigma-70 factor domain 4) with anti-sigma-K factor RskA.

In terms of biological role, sigma factors are initiation factors that promote the attachment of RNA polymerase to specific initiation sites and are then released. Extracytoplasmic function (ECF) sigma factors are held in an inactive form by an anti-sigma factor until released by regulated intramembrane proteolysis. The sequence is that of ECF RNA polymerase sigma factor SigK (sigK) from Mycobacterium ulcerans (strain Agy99).